A 226-amino-acid polypeptide reads, in one-letter code: Ribosomal RNA large subunit methyltransferase E (226 aa).

Gly82, Trp84, Asp100, Asp116, and Asp140 together coordinate S-adenosyl-L-methionine. Lys180 acts as the Proton acceptor in catalysis.

Belongs to the class I-like SAM-binding methyltransferase superfamily. RNA methyltransferase RlmE family.

It is found in the cytoplasm. The catalysed reaction is uridine(2552) in 23S rRNA + S-adenosyl-L-methionine = 2'-O-methyluridine(2552) in 23S rRNA + S-adenosyl-L-homocysteine + H(+). Specifically methylates the uridine in position 2552 of 23S rRNA at the 2'-O position of the ribose in the fully assembled 50S ribosomal subunit. This chain is Ribosomal RNA large subunit methyltransferase E, found in Caulobacter sp. (strain K31).